We begin with the raw amino-acid sequence, 554 residues long: CTP synthase (554 aa).

Residues 1 to 265 (MTPLIFVTGG…DEIVIDQFKL (265 aa)) are amidoligase domain. A CTP-binding site is contributed by S13. UTP is bound at residue S13. ATP contacts are provided by residues 14–19 (SLGKGI) and D71. Mg(2+)-binding residues include D71 and E139. CTP-binding positions include 146-148 (DIE), 186-191 (KTKPTQ), and K222. Residues 186-191 (KTKPTQ) and K222 each bind UTP. Residues 292-545 (TIAVVGKYVD…VKASRARKAG (254 aa)) form the Glutamine amidotransferase type-1 domain. Position 353 (G353) interacts with L-glutamine. Residue C380 is the Nucleophile; for glutamine hydrolysis of the active site. Residues 381 to 384 (YGMQ), E404, and R471 each bind L-glutamine. Catalysis depends on residues H518 and E520.

Belongs to the CTP synthase family. In terms of assembly, homotetramer.

It catalyses the reaction UTP + L-glutamine + ATP + H2O = CTP + L-glutamate + ADP + phosphate + 2 H(+). It carries out the reaction L-glutamine + H2O = L-glutamate + NH4(+). The catalysed reaction is UTP + NH4(+) + ATP = CTP + ADP + phosphate + 2 H(+). The protein operates within pyrimidine metabolism; CTP biosynthesis via de novo pathway; CTP from UDP: step 2/2. With respect to regulation, allosterically activated by GTP, when glutamine is the substrate; GTP has no effect on the reaction when ammonia is the substrate. The allosteric effector GTP functions by stabilizing the protein conformation that binds the tetrahedral intermediate(s) formed during glutamine hydrolysis. Inhibited by the product CTP, via allosteric rather than competitive inhibition. Catalyzes the ATP-dependent amination of UTP to CTP with either L-glutamine or ammonia as the source of nitrogen. Regulates intracellular CTP levels through interactions with the four ribonucleotide triphosphates. The protein is CTP synthase of Xylella fastidiosa (strain M12).